Here is a 199-residue protein sequence, read N- to C-terminus: 7-methyl-GTP pyrophosphatase (199 aa).

Asp76 functions as the Proton acceptor in the catalytic mechanism.

The protein belongs to the Maf family. YceF subfamily. A divalent metal cation serves as cofactor.

It localises to the cytoplasm. It carries out the reaction N(7)-methyl-GTP + H2O = N(7)-methyl-GMP + diphosphate + H(+). In terms of biological role, nucleoside triphosphate pyrophosphatase that hydrolyzes 7-methyl-GTP (m(7)GTP). May have a dual role in cell division arrest and in preventing the incorporation of modified nucleotides into cellular nucleic acids. This Rhizobium meliloti (strain 1021) (Ensifer meliloti) protein is 7-methyl-GTP pyrophosphatase.